The following is a 166-amino-acid chain: Probable glucosamine 6-phosphate N-acetyltransferase 2 (166 aa).

The N-acetyltransferase domain maps to 21–166 (VQIRRLEATD…EKGVQMAIYF (146 aa)). Substrate contacts are provided by residues Ser43, 93-96 (KFLR), and 105-107 (EDV). 115–120 (GRGLGL) contacts acetyl-CoA. 136–137 (YK) provides a ligand contact to substrate. 150 to 152 (YAK) serves as a coordination point for acetyl-CoA.

The protein belongs to the acetyltransferase family. GNA1 subfamily. As to quaternary structure, homodimer.

It localises to the endoplasmic reticulum membrane. The enzyme catalyses D-glucosamine 6-phosphate + acetyl-CoA = N-acetyl-D-glucosamine 6-phosphate + CoA + H(+). The protein operates within nucleotide-sugar biosynthesis; UDP-N-acetyl-alpha-D-glucosamine biosynthesis; N-acetyl-alpha-D-glucosamine 1-phosphate from alpha-D-glucosamine 6-phosphate (route I): step 1/2. In terms of biological role, acetyltransferase involved in UDP-N-acetylglucosamine (UDP-GlcNAc) biosynthesis. UDP-GlcNAc is an essential metabolite that serves as an initial sugar donor of N-glycan synthesis and thus plays an important role in protein and lipid glycosylation. The chain is Probable glucosamine 6-phosphate N-acetyltransferase 2 from Oryza sativa subsp. japonica (Rice).